A 207-amino-acid polypeptide reads, in one-letter code: Vascular endothelial growth factor B (207 aa).

The signal sequence occupies residues 1–21 (MSPLLRRLLLAALLQLAPAQA). 3 disulfides stabilise this stretch: C47–C89, C78–C122, and C82–C124. Residues 122 to 139 (CECRPKKKDSAVKPDRAA) show a composition bias toward basic and acidic residues. Residues 122 to 207 (CECRPKKKDS…AASSVAKGGA (86 aa)) form a disordered region. The segment covering 174-207 (PSAHAAPSTTSALTPGPAAAAADAAASSVAKGGA) has biased composition (low complexity).

The protein belongs to the PDGF/VEGF growth factor family. In terms of assembly, homodimer; disulfide-linked. Can also form heterodimer with VEGF. VEGF-B186 is O-glycosylated. Expressed in all tissues except liver. Highest levels found in heart, skeletal muscle and pancreas.

It is found in the secreted. Growth factor for endothelial cells. VEGF-B167 binds heparin and neuropilin-1 whereas the binding to neuropilin-1 of VEGF-B186 is regulated by proteolysis. This is Vascular endothelial growth factor B (VEGFB) from Homo sapiens (Human).